Here is a 467-residue protein sequence, read N- to C-terminus: Signal transduction histidine-protein kinase BaeS (467 aa).

Residues 1-11 are Cytoplasmic-facing; that stretch reads MKFWRPGITGK. Residues 12–32 form a helical membrane-spanning segment; it reads LFLAIFATCIVLLISMHWAVR. Over 33 to 167 the chain is Periplasmic; sequence ISFERGFIDY…NFDKQQRQTS (135 aa). A helical membrane pass occupies residues 168-186; the sequence is WLIVALATLLAALATFLLA. Positions 187–239 constitute an HAMP domain; sequence RGLLAPVKRLVDGTHKLAAGDFTTRVTPTSEDELGKLAQDFNQLASTLEKNQQ. At 187–467 the chain is on the cytoplasmic side; sequence RGLLAPVKRL…PLERDLQREV (281 aa). Residues 247-461 enclose the Histidine kinase domain; it reads DISHELRTPL…SITVELPLER (215 aa). Histidine 250 is subject to Phosphohistidine; by autocatalysis.

Autophosphorylated.

It localises to the cell inner membrane. It catalyses the reaction ATP + protein L-histidine = ADP + protein N-phospho-L-histidine.. In terms of biological role, member of the two-component regulatory system BaeS/BaeR which responds to envelope stress. Activates expression of periplasmic chaperone spy in response to spheroplast formation, indole and P pili protein PapG overexpression. Activates BaeR by phosphorylation which then activates the mdtABCD and probably the CRISPR-Cas casABCDE-ygbT-ygbF operons. This chain is Signal transduction histidine-protein kinase BaeS, found in Escherichia coli (strain K12).